Consider the following 204-residue polypeptide: UPF0215 protein MTH_1316 (204 aa).

The protein belongs to the UPF0215 family.

This Methanothermobacter thermautotrophicus (strain ATCC 29096 / DSM 1053 / JCM 10044 / NBRC 100330 / Delta H) (Methanobacterium thermoautotrophicum) protein is UPF0215 protein MTH_1316.